The following is a 204-amino-acid chain: MATDTLTHATAHAHEHGHHDAGGTKIFGFWIYLMSDCILFSILFATYAVLVNGTAGGPTGKDIFELPFVLVETFLLLFSSITYGMAAIAMYKNNKSQVISWLALTWLFGAGFIGMEIYEFHHLIVNGMGPDRSGFLSAFFALVGTHGLHVTSGLIWMAVLMVQIARRGLTSTNRTRIMCLSLFWHFLDVVWICVFTVVYLMGAM.

Residues 1–31 (MATDTLTHATAHAHEHGHHDAGGTKIFGFWI) lie on the Cytoplasmic side of the membrane. Residues 32–50 (YLMSDCILFSILFATYAVL) traverse the membrane as a helical segment. Over 51–66 (VNGTAGGPTGKDIFEL) the chain is Periplasmic. Residues 67–85 (PFVLVETFLLLFSSITYGM) form a helical membrane-spanning segment. The Cytoplasmic portion of the chain corresponds to 86–101 (AAIAMYKNNKSQVISW). The helical transmembrane segment at 102–120 (LALTWLFGAGFIGMEIYEF) threads the bilayer. The Periplasmic segment spans residues 121-142 (HHLIVNGMGPDRSGFLSAFFAL). The chain crosses the membrane as a helical span at residues 143-161 (VGTHGLHVTSGLIWMAVLM). Over 162–184 (VQIARRGLTSTNRTRIMCLSLFW) the chain is Cytoplasmic. The helical transmembrane segment at 185-203 (HFLDVVWICVFTVVYLMGA) threads the bilayer. Position 204 (methionine 204) is a topological domain, periplasmic.

This sequence belongs to the cytochrome c oxidase subunit 3 family. As to quaternary structure, heterooctamer of two A chains, two B chains, two C chains and two D chains.

Its subcellular location is the cell inner membrane. Functionally, cytochrome bo(3) ubiquinol terminal oxidase is the component of the aerobic respiratory chain of E.coli that predominates when cells are grown at high aeration. Has proton pump activity across the membrane in addition to electron transfer, pumping 2 protons/electron. This is Cytochrome bo(3) ubiquinol oxidase subunit 3 (cyoC) from Escherichia coli O6:H1 (strain CFT073 / ATCC 700928 / UPEC).